The chain runs to 415 residues: Gamma-glutamyl phosphate reductase (415 aa).

This sequence belongs to the gamma-glutamyl phosphate reductase family.

It localises to the cytoplasm. The catalysed reaction is L-glutamate 5-semialdehyde + phosphate + NADP(+) = L-glutamyl 5-phosphate + NADPH + H(+). Its pathway is amino-acid biosynthesis; L-proline biosynthesis; L-glutamate 5-semialdehyde from L-glutamate: step 2/2. Its function is as follows. Catalyzes the NADPH-dependent reduction of L-glutamate 5-phosphate into L-glutamate 5-semialdehyde and phosphate. The product spontaneously undergoes cyclization to form 1-pyrroline-5-carboxylate. This Thermotoga sp. (strain RQ2) protein is Gamma-glutamyl phosphate reductase.